The primary structure comprises 181 residues: Probable RNA 2'-phosphotransferase (181 aa).

This sequence belongs to the KptA/TPT1 family.

In terms of biological role, removes the 2'-phosphate from RNA via an intermediate in which the phosphate is ADP-ribosylated by NAD followed by a presumed transesterification to release the RNA and generate ADP-ribose 1''-2''-cyclic phosphate (APPR&gt;P). May function as an ADP-ribosylase. The polypeptide is Probable RNA 2'-phosphotransferase (Acaryochloris marina (strain MBIC 11017)).